We begin with the raw amino-acid sequence, 143 residues long: Sporulation-specific cell division protein SsgB (143 aa).

The protein belongs to the SsgA family. As to quaternary structure, interacts with SsgA. Interacts with FtsZ (via N-terminus).

It is found in the cell septum. Involved in sporulation-specific cell division. Required for early stages of sporulation. Important in the process of growth cessation prior to sporulation-specific cell division. Recruits cell division protein FtsZ to the future septum sites and tethers the contractile ring structure (Z ring) to the cytoplasmic membrane during sporulation. Stimulates polymerization and filament length of FtsZ in vitro. The polypeptide is Sporulation-specific cell division protein SsgB (Salinispora tropica (strain ATCC BAA-916 / DSM 44818 / JCM 13857 / NBRC 105044 / CNB-440)).